Reading from the N-terminus, the 514-residue chain is Glucose-1-phosphate adenylyltransferase small subunit 2, chloroplastic/amyloplastic/cytosolic (514 aa).

A chloroplast-targeting transit peptide spans Met-1–Arg-64. The interval Arg-35–Thr-74 is disordered. Low complexity predominate over residues Gly-41–Ala-52.

The protein belongs to the bacterial/plant glucose-1-phosphate adenylyltransferase family. As to quaternary structure, heterotetramer composed of two small and two large subunits. Expressed in leaves.

The protein resides in the plastid. Its subcellular location is the chloroplast. It is found in the amyloplast. The protein localises to the cytoplasm. It localises to the cytosol. The enzyme catalyses alpha-D-glucose 1-phosphate + ATP + H(+) = ADP-alpha-D-glucose + diphosphate. It participates in glycan biosynthesis; starch biosynthesis. Its activity is regulated as follows. Activated by 3'phosphoglycerate, inhibited by orthophosphate. Allosteric regulation. Inhibited by inorganic phosphate (Pi). Its function is as follows. Involved in synthesis of starch. Catalyzes the synthesis of ADP-glucose, a molecule that serves as an activated glycosyl donor for alpha-1,4-glucan synthesis. The chloroplastic isoform 1 is essential for starch synthesis in leaf chloroplasts and the cytosolic isoform 2 for synthesis in seed endosperm. This Oryza sativa subsp. japonica (Rice) protein is Glucose-1-phosphate adenylyltransferase small subunit 2, chloroplastic/amyloplastic/cytosolic.